The chain runs to 121 residues: MKHRIGRVEGEILRELTKILQKNIRDPRLSEVTITAVECMNDLSYATVYYSLLTEDANKEKEVQEGLEKAKGMMRHLLGQTLTVYKVPELIFKRDNSVKYGSKIDRLIAEVKKQDAERASK.

This sequence belongs to the RbfA family. In terms of assembly, monomer. Binds 30S ribosomal subunits, but not 50S ribosomal subunits or 70S ribosomes.

It is found in the cytoplasm. In terms of biological role, one of several proteins that assist in the late maturation steps of the functional core of the 30S ribosomal subunit. Associates with free 30S ribosomal subunits (but not with 30S subunits that are part of 70S ribosomes or polysomes). Required for efficient processing of 16S rRNA. May interact with the 5'-terminal helix region of 16S rRNA. In Lactobacillus helveticus (strain DPC 4571), this protein is Ribosome-binding factor A.